Consider the following 427-residue polypeptide: 5-hydroxybenzimidazole synthase BzaA (427 aa).

It belongs to the ThiC family. 5-hydroxybenzimidazole synthase subfamily. [4Fe-4S] cluster serves as cofactor.

The enzyme catalyses 5-amino-1-(5-phospho-beta-D-ribosyl)imidazole + AH2 + S-adenosyl-L-methionine = 5-hydroxybenzimidazole + 5'-deoxyadenosine + formate + L-methionine + A + NH4(+) + phosphate + 2 H(+). It functions in the pathway cofactor biosynthesis; adenosylcobalamin biosynthesis. In terms of biological role, together with BzaB, catalyzes the conversion of aminoimidazole ribotide (AIR) to 5-hydroxybenzimidazole (5-HBI) in a radical S-adenosyl-L-methionine (SAM)-dependent reaction. Is thus involved in the anaerobic biosynthesis of dimethylbenzimidazole (DMB), the lower axial ligand of vitamin B12 (cobalamin). Requires BzaB for catalytic activity, as BzaA alone displays no activity. The chain is 5-hydroxybenzimidazole synthase BzaA from Eubacterium limosum.